Reading from the N-terminus, the 290-residue chain is Nucleotide-binding protein BPP4038 (290 aa).

An ATP-binding site is contributed by 9–16 (GISGSGKS). 58–61 (DVRS) contributes to the GTP binding site.

This sequence belongs to the RapZ-like family.

Displays ATPase and GTPase activities. The protein is Nucleotide-binding protein BPP4038 of Bordetella parapertussis (strain 12822 / ATCC BAA-587 / NCTC 13253).